A 558-amino-acid polypeptide reads, in one-letter code: Potassium-transporting ATPase potassium-binding subunit (558 aa).

11 helical membrane passes run 1–21 (MDTLAGILQVASVVLVLVLIH), 59–79 (PAYLRAVLAFSLVGVLVVYGL), 85–105 (FLPYALGLPAVPEGLSFNTAV), 130–150 (GLAVQNFVSAAVGIAVAIALV), 179–199 (LSLVTAVILIAGGVIQNFAGF), 245–265 (PTAWTSAFQVILMLAIPFSLP), 279–299 (TAIVAVMATIFVVSFTALTIF), 374–394 (GLYGMLILAVISVFVAGLLVG), 416–436 (ILVTPILVLVGTALSFAIPAV), 484–504 (ALGVAMLLGRFLPIVFVLALA), and 527–547 (FVGLLIGVTVIVTALTYFPVL).

It belongs to the KdpA family. The system is composed of three essential subunits: KdpA, KdpB and KdpC.

The protein resides in the cell membrane. In terms of biological role, part of the high-affinity ATP-driven potassium transport (or Kdp) system, which catalyzes the hydrolysis of ATP coupled with the electrogenic transport of potassium into the cytoplasm. This subunit binds the extracellular potassium ions and delivers the ions to the membrane domain of KdpB through an intramembrane tunnel. The protein is Potassium-transporting ATPase potassium-binding subunit of Clavibacter michiganensis subsp. michiganensis (strain NCPPB 382).